A 78-amino-acid chain; its full sequence is MICOS complex subunit MIC10 (78 aa).

At Ser-2 the chain carries N-acetylserine. A helical membrane pass occupies residues 17–36 (AVVKIGTGFGLGIVFSLTFF). At 37–78 (KRRMWPLAFGSGMGLGMAYSNCQHDFQAPYLLHGKYVKEQEQ) the chain is on the mitochondrial intermembrane side.

Belongs to the MICOS complex subunit Mic10 family. Component of the mitochondrial contact site and cristae organizing system (MICOS) complex, composed of at least MICOS10/MIC10, CHCHD3/MIC19, CHCHD6/MIC25, APOOL/MIC27, IMMT/MIC60, APOO/MIC23/MIC26 and MICOS13/MIC13. This complex was also known under the names MINOS or MitOS complex. The MICOS complex associates with mitochondrial outer membrane proteins SAMM50, MTX1 and MTX2 (together described as components of the mitochondrial outer membrane sorting assembly machinery (SAM) complex) and DNAJC11, mitochondrial inner membrane protein TMEM11 and with HSPA9. The MICOS and SAM complexes together with DNAJC11 are part of a large protein complex spanning both membranes termed the mitochondrial intermembrane space bridging (MIB) complex. Interacts with IMMT/MIC60 and MICOS13/MIC13. Interacts with APOO/MIC23/MIC26 and APOOL/MIC27. Interacts with ARMC1.

Its subcellular location is the mitochondrion inner membrane. Functionally, component of the MICOS complex, a large protein complex of the mitochondrial inner membrane that plays crucial roles in the maintenance of crista junctions, inner membrane architecture, and formation of contact sites to the outer membrane. The sequence is that of MICOS complex subunit MIC10 from Homo sapiens (Human).